The sequence spans 261 residues: Kallikrein 1-related peptidase b16 (261 aa).

Positions 1–18 are cleaved as a signal peptide; sequence MWFLILFLALSLGGIDAA. A propeptide spans 19–24 (activation peptide); it reads PPVQSR. In terms of domain architecture, Peptidase S1 spans 25-258; it reads IVGGFKCEKN…FNSWIKDTMM (234 aa). Disulfide bonds link C31/C173, C50/C66, C152/C219, C184/C198, and C209/C234. H65 acts as the Charge relay system in catalysis. N-linked (GlcNAc...) asparagine glycosylation occurs at N102. Catalysis depends on D120, which acts as the Charge relay system. S213 functions as the Charge relay system in the catalytic mechanism.

This sequence belongs to the peptidase S1 family. Kallikrein subfamily.

It carries out the reaction Cleavage of the Leu-|-Leu bond in synthetic tetradecapeptide renin substrate, to produce angiotensin I, but not active on natural angiotensinogen. Also hydrolyzes Bz-Arg-p-nitroanilide.. The polypeptide is Kallikrein 1-related peptidase b16 (Klk1b16) (Mus musculus (Mouse)).